The sequence spans 442 residues: Proline--tRNA ligase (442 aa).

It belongs to the class-II aminoacyl-tRNA synthetase family. ProS type 2 subfamily. As to quaternary structure, homodimer.

It localises to the cytoplasm. It catalyses the reaction tRNA(Pro) + L-proline + ATP = L-prolyl-tRNA(Pro) + AMP + diphosphate. Its function is as follows. Catalyzes the attachment of proline to tRNA(Pro) in a two-step reaction: proline is first activated by ATP to form Pro-AMP and then transferred to the acceptor end of tRNA(Pro). The polypeptide is Proline--tRNA ligase (Brucella melitensis biotype 2 (strain ATCC 23457)).